Consider the following 434-residue polypeptide: Putative ZDHHC-type palmitoyltransferase 1 (434 aa).

The next 2 helical transmembrane spans lie at 25 to 45 (AYFI…LIFV) and 53 to 73 (ITAA…IFLI). Residues 115 to 165 (KWCETCCLYRPPRANHCGICNNCVERFDHHCPWVGNCIGRRNYQTFLYFLY) form the DHHC domain. The active-site S-palmitoyl cysteine intermediate is C145. The chain crosses the membrane as a helical span at residues 160–180 (FLYFLYSLGFLCIWIMGFCVA). N-linked (GlcNAc...) asparagine glycosylation is found at N207, N216, N274, N346, N362, N373, N381, N387, and N393. The segment at 262–330 (TIPTPNNING…ISPPQMLQRQ (69 aa)) is disordered. Residues 267-316 (NNINGNNNNSINNNNNNNNNNNNNNNNNNNNNNNNNNINNGNSGGTTNNG) are compositionally biased toward low complexity. A disordered region spans residues 365-434 (TISEDKPKNL…SLNHELQVNV (70 aa)). Low complexity predominate over residues 373 to 387 (NLSNSNNNNNTNNKN). Residues 409–419 (DDFKSDNDKEI) are compositionally biased toward basic and acidic residues. An N-linked (GlcNAc...) asparagine glycan is attached at N420. Polar residues predominate over residues 420-434 (NSSSLSLNHELQVNV).

It belongs to the DHHC palmitoyltransferase family.

It is found in the membrane. The catalysed reaction is L-cysteinyl-[protein] + hexadecanoyl-CoA = S-hexadecanoyl-L-cysteinyl-[protein] + CoA. The sequence is that of Putative ZDHHC-type palmitoyltransferase 1 from Dictyostelium discoideum (Social amoeba).